The following is a 134-amino-acid chain: Lymphocyte antigen 6 complex locus protein G6d (134 aa).

Residues 1–19 (MNSQLIGILFSALLGAALG) form the signal peptide. The 100-residue stretch at 22-121 (MRCYDCGGGP…ASSSTPLCIL (100 aa)) folds into the UPAR/Ly6 domain. 5 disulfides stabilise this stretch: Cys-24–Cys-48, Cys-27–Cys-35, Cys-42–Cys-76, Cys-82–Cys-101, and Cys-102–Cys-107. Thr-68 carries an O-linked (GalNAc...) threonine glycan. Asn-108 carries the GPI-anchor amidated asparagine lipid modification. The propeptide at 109–134 (GAVASSSTPLCILAAVTTLAWLLSGQ) is removed in mature form.

In terms of assembly, homodimer. O-glycosylated.

It localises to the cell membrane. The protein is Lymphocyte antigen 6 complex locus protein G6d (Ly6g6d) of Rattus norvegicus (Rat).